The sequence spans 207 residues: U1 small nuclear ribonucleoprotein C (207 aa).

Residues 4–36 (YYCDYCDTYLTHDSPSVRKQHNAGYKHKANVRI) form a Matrin-type zinc finger. Pro residues-rich tracts occupy residues 105 to 115 (PPQGYMPPPGV) and 122 to 131 (PGAPLPPPPQ). The tract at residues 105–207 (PPQGYMPPPG…PSAESPESNE (103 aa)) is disordered. Over residues 132 to 144 (NGILRPPGMAPIP) the composition is skewed to low complexity. The segment covering 162–183 (GPPPNYNGLPPPPPYHTNPAAP) has biased composition (pro residues). The span at 184 to 207 (PSGNFNNPNLNNPNPSAESPESNE) shows a compositional bias: low complexity.

It belongs to the U1 small nuclear ribonucleoprotein C family. As to quaternary structure, U1 snRNP is composed of the 7 core Sm proteins B/B', D1, D2, D3, E, F and G that assemble in a heptameric protein ring on the Sm site of the small nuclear RNA to form the core snRNP, and at least 3 U1 snRNP-specific proteins U1-70K, U1-A and U1-C. U1-C interacts with U1 snRNA and the 5' splice-site region of the pre-mRNA.

It localises to the nucleus. Functionally, component of the spliceosomal U1 snRNP, which is essential for recognition of the pre-mRNA 5' splice-site and the subsequent assembly of the spliceosome. U1-C is directly involved in initial 5' splice-site recognition for both constitutive and regulated alternative splicing. The interaction with the 5' splice-site seems to precede base-pairing between the pre-mRNA and the U1 snRNA. Stimulates commitment or early (E) complex formation by stabilizing the base pairing of the 5' end of the U1 snRNA and the 5' splice-site region. The polypeptide is U1 small nuclear ribonucleoprotein C (Arabidopsis thaliana (Mouse-ear cress)).